We begin with the raw amino-acid sequence, 526 residues long: Methyltetrahydroprotoberberine 14-monooxygenase (526 aa).

A helical transmembrane segment spans residues 14–34; the sequence is LLLQYLQPISVALVVIALVWN. A heme-binding site is contributed by Cys468.

Belongs to the cytochrome P450 family. Heme is required as a cofactor. As to expression, mainly expressed in roots, and barely in stems, leaves and carpels.

The protein localises to the membrane. It carries out the reaction (S)-cis-N-methylcanadine + reduced [NADPH--hemoprotein reductase] + O2 = allocryptopine + oxidized [NADPH--hemoprotein reductase] + H2O + 2 H(+). The catalysed reaction is (S)-cis-N-methylstylopine + reduced [NADPH--hemoprotein reductase] + O2 = protopine + oxidized [NADPH--hemoprotein reductase] + H2O + 2 H(+). It catalyses the reaction (S)-cis-N-methyltetrahydrothalifendine + reduced [NADPH--hemoprotein reductase] + O2 = 7-hydroxy-8-methoxy-11-methyl-17,19-dioxa-11-azatetracyclo[12.7.0.0(4,9).0(16,20)]henicosa-1(21),4(9),5,7,14,16(20)-hexaen-2-one + oxidized [NADPH--hemoprotein reductase] + H2O + 2 H(+). The enzyme catalyses (S)-cis-N-methyltetrahydropalmatine + reduced [NADPH--hemoprotein reductase] + O2 = muramine + oxidized [NADPH--hemoprotein reductase] + H2O + 2 H(+). It functions in the pathway alkaloid biosynthesis. Its activity is regulated as follows. Repressed by cytochrome P450 inhibitors ketoconazole, metyrapone, prochloraz, ancymidol and cytochrome C. Functionally, involved in the biosynthesis of the isoquinoline alkaloid sanguinarine. Catalyzes the conversion of N-methylated protoberberine alkaloids N-methylstylopine and N-methylcanadine into protopine and allocryptopine, respectively. Can also use (S)-cis-N-methyltetrahydrothalifendine and (S)-cis-N-methyltetrahydropalmatine as substrates. The polypeptide is Methyltetrahydroprotoberberine 14-monooxygenase (Papaver somniferum (Opium poppy)).